The sequence spans 613 residues: TANK-binding kinase 1-binding protein 1 (613 aa).

The tract at residues methionine 1–cysteine 280 is homodimerization. Positions tyrosine 48–isoleucine 162 form a coiled coil. Residue serine 184 is modified to Phosphoserine. Positions threonine 218 to glutamine 277 form a coiled coil. Residues glycine 281–asparagine 330 form an interaction with TBK1 and IKBKE region. Residues alanine 328 to arginine 457 are disordered. A compositionally biased stretch (pro residues) spans proline 346 to alanine 361. A compositionally biased stretch (low complexity) spans proline 362–serine 372. Serine 365, serine 372, serine 379, serine 385, serine 400, and serine 415 each carry phosphoserine. A compositionally biased stretch (pro residues) spans proline 389 to cysteine 406. Over residues proline 416–glycine 433 the composition is skewed to pro residues. Residues serine 502 and serine 532 each carry the phosphoserine modification. The segment at isoleucine 581–histidine 607 adopts a UBZ1-type zinc-finger fold. The Zn(2+) site is built by cysteine 584, cysteine 587, histidine 603, and histidine 607.

As to quaternary structure, homodimer. May form a heterodimer with NAP1. Interacts with TKB1 and IKBKE. Weakly interacts with DDX3X.

Adapter protein which constitutively binds TBK1 and IKBKE playing a role in antiviral innate immunity. Essential for the efficient induction of IRF-dependent transcription following infection with Sendai virus. The chain is TANK-binding kinase 1-binding protein 1 from Rattus norvegicus (Rat).